The sequence spans 409 residues: Peptidase T (409 aa).

His78 is a Zn(2+) binding site. Asp80 is a catalytic residue. Asp140 is a binding site for Zn(2+). Glu173 acts as the Proton acceptor in catalysis. Zn(2+)-binding residues include Glu174, Asp196, and His379.

This sequence belongs to the peptidase M20B family. Zn(2+) serves as cofactor.

Its subcellular location is the cytoplasm. It carries out the reaction Release of the N-terminal residue from a tripeptide.. Its function is as follows. Cleaves the N-terminal amino acid of tripeptides. This chain is Peptidase T, found in Salmonella agona (strain SL483).